We begin with the raw amino-acid sequence, 342 residues long: L-threonine 3-dehydrogenase (342 aa).

A Zn(2+)-binding site is contributed by Cys39. Active-site charge relay system residues include Thr41 and His44. Positions 64, 65, 94, 97, 100, and 108 each coordinate Zn(2+). NAD(+) is bound by residues Ile176, Asp196, Arg201, 263–265, and 287–288; these read LGI and IY.

The protein belongs to the zinc-containing alcohol dehydrogenase family. Homotetramer. It depends on Zn(2+) as a cofactor.

The protein resides in the cytoplasm. The enzyme catalyses L-threonine + NAD(+) = (2S)-2-amino-3-oxobutanoate + NADH + H(+). The protein operates within amino-acid degradation; L-threonine degradation via oxydo-reductase pathway; glycine from L-threonine: step 1/2. In terms of biological role, catalyzes the NAD(+)-dependent oxidation of L-threonine to 2-amino-3-ketobutyrate. This is L-threonine 3-dehydrogenase from Protochlamydia amoebophila (strain UWE25).